Reading from the N-terminus, the 194-residue chain is Calcium channel flower (194 aa).

3 consecutive transmembrane segments (helical) span residues 35-55 (LGIVAAFFAILFGLWNVFSII), 66-88 (IIQMVAGFVVMLLEAPCCFVCFE), and 113-133 (AIPPIILCFGLASLFGSGLIF).

Belongs to the calcium channel flower family. Homomultimer. Associates with the dally/ magu complex.

The protein localises to the cytoplasmic vesicle. It is found in the secretory vesicle. It localises to the synaptic vesicle membrane. Its subcellular location is the presynaptic cell membrane. The protein resides in the endosome. Its activity is regulated as follows. Channel activity is inhibited by La(3+), which reduces Ca(2+) influx and thus inhibits it's function in promoting activity-dependent bulk endocytosis (ADBE) in response to high stimuli. Its function is as follows. Transmembrane protein which mediates synaptic endocytosis, fitness-based cell culling, neuronal culling, morphogen gradient scaling, and calcium transport. Regulates synaptic endocytosis and hence couples exo- with endocytosis. Controls two major modes of synaptic vesicle (SV) endocytosis in the synaptic boutons of neuromuscular junctions (NMJs); Ca(2+) channel-independent Clathrin-mediated endocytosis (CME) in response to mild stimulation, and Ca(2+) channel-dependent activity-dependent bulk endocytosis (ADBE) in response to strong stimulation. Functions in ADBE and subsequent SV reformation from bulk endosomes by initiating Ca(2+) channel-dependent phosphatidylinositol 4,5-bisphosphate (PtdIns(4,5)P2) compartmentalization in synaptic boutons. There it acts at the periactive zone to provide the low Ca(2+) levels required to initiate Calcineurin activation and upregulate PtdIns(4,5)P2. Conversely PtdIns(4,5)P2 enhances fwe Ca(2+) channel-activity, establishing a positive feedback loop that induces PtdIns(4,5)P2 microdomain at the periactive zone. These microdomains trigger bulk membrane invagination (i.e. ADBE) by triggering actin polymerization while also promoting localization of fwe to bulk endosomes, thereby removing the ADBE trigger to reduce endocytosis and prevent excess membrane uptake. PtdIns(4,5)P2 then promotes SV reformation from the bulk endosomes, to coordinate ADBE and subsequent SV reformation. Different combinations of the flower isoforms at the cell membrane are also required for the identification and elimination of suboptimal or supernumerary cells during development, regeneration, and adulthood. Required for the recognition and elimination of unfit cells in the developing wing during cell competition. In the developing pupal retina, mediates the elimination of unwanted postmitotic neurons, including supernumerary photoreceptor neurons that form at the periphery of the retina and are contained within incomplete ommatidia units. Also required for efficient elimination and replacement of old neurons by newly generated neurons during regeneration in the adult brain following mechanical injury. Downstream of the flower fitness fingerprints, cells identified as unwanted or unfit are eliminated via apoptosis through the expression of ahuizotl (azot). However, the cells marked for elimination by the flower isoforms only undergo apoptosis if additional thresholds are met; (1) their neighboring fit/healthy cells express different levels of the fwe isoforms, and (2) the levels of the protective signal SPARC expressed by the loser or unwanted cells are unable to inhibit caspase activation. These additional thresholds for flower-mediated apoptosis, allows useful cells to recover from transient and limited stress before they are unnecessarily eliminated. Functions with dally and magu in a mechanism of scaling, which utilises apoptosis to ensure that the dpp morphogen gradient, which mediates organ growth, remains proportional to the size of the growing wing. In this mechanism, fwe represses dally- and Magu-dependent activity in expanding the gradient, and dally/Magu inhibits fwe-dependent apoptosis to keep cell death rate low. When the levels of these different proteins are optimally regulated the gradient correctly scales with organ growth but when this fails, fwe-mediated apoptosis is activated to trim the developing tissue to match the correct size of the gradient. The chain is Calcium channel flower from Drosophila yakuba (Fruit fly).